The primary structure comprises 267 residues: Undecaprenyl-diphosphatase (267 aa).

The next 7 membrane-spanning stretches (helical) occupy residues 1–21 (MPLLQLILVALIQGVTEFLPV), 40–60 (GQAIDVAVHVGTLAAVVLFFW), 85–105 (LALGLIVATIPTVIFGTFLYF), 112–132 (LRSVAVIGWTMLVFGVVLYIA), 188–208 (IAMLMSIPTIIASGVLLGTEV), 219–239 (DMGIAALLAMASALAALALMM), and 245–265 (VSFTPYVIYRVALGMVLLFIA).

It belongs to the UppP family.

It localises to the cell inner membrane. It carries out the reaction di-trans,octa-cis-undecaprenyl diphosphate + H2O = di-trans,octa-cis-undecaprenyl phosphate + phosphate + H(+). In terms of biological role, catalyzes the dephosphorylation of undecaprenyl diphosphate (UPP). Confers resistance to bacitracin. The chain is Undecaprenyl-diphosphatase from Ruegeria sp. (strain TM1040) (Silicibacter sp.).